Consider the following 404-residue polypeptide: MLPTLYTCLLWLSTSGLWTVQAKGSDTDMSTRNPHRDLAPNNVDFAFTLYKHLVASAPGKNVFISPVSISTALAMLSLGARGYTREQLLQGLGFNLTEMSEGEIHRAFRHLHHLLRESNTTLDMTMGNALFLDHSLELLESFSADTKHYYELEALTTDFQDWAGASRQINEYIKNKTQGNIVDLFSESDSSATLILVNYIFFKGMWAHSFDLESTREENFHVNEATTVQVPMMFQSNTIKYLNDSVLPCQLVQLDYTGNETVFFVLPVKGKMDSVITALSRDTIQRWSKSLTMSQVDLYIPKISISGAYDLGGIMGDMGIADLLSNRTHFSGITQEALPKVSKVVHKAALQVDEKGLEADAPTRVSLSAAPGPLTLRFNRPFIIMIFDDFTWSSLFLGKVVNPT.

A signal peptide spans Met1 to Ala22. N-linked (GlcNAc...) asparagine glycosylation is found at Asn95, Asn119, and Asn175. Gln253 provides a ligand contact to cortisol. A glycan (N-linked (GlcNAc...) asparagine) is linked at Asn259. Gln285 contacts cortisol. The N-linked (GlcNAc...) asparagine glycan is linked to Asn326. Position 392 (Trp392) interacts with cortisol.

Belongs to the serpin family. Post-translationally, glycosylation in position Asn-259 is needed for steroid binding.

The protein resides in the secreted. Its function is as follows. Major transport protein for glucocorticoids and progestins in the blood of almost all vertebrate species. This chain is Corticosteroid-binding globulin (SERPINA6), found in Bos taurus (Bovine).